Here is a 147-residue protein sequence, read N- to C-terminus: Hemoglobin subunit beta-M (147 aa).

An N-acetylvaline modification is found at V2. Positions 3-147 (HLTSEEKNCI…VAHALAHKYH (145 aa)) constitute a Globin domain. T13 is modified (phosphothreonine). A Phosphoserine modification is found at S45. The residue at position 60 (K60) is an N6-acetyllysine. H64 is a binding site for heme b. The residue at position 83 (K83) is an N6-acetyllysine. Residue H93 participates in heme b binding. C94 is subject to S-nitrosocysteine. K145 carries the N6-acetyllysine modification.

The protein belongs to the globin family. As to quaternary structure, heterotetramer of two alpha chains and two beta chains. As to expression, red blood cells.

Involved in oxygen transport from the lung to the various peripheral tissues. The chain is Hemoglobin subunit beta-M (HBB) from Didelphis virginiana (North American opossum).